A 639-amino-acid chain; its full sequence is DNA mismatch repair protein MutL (639 aa).

The segment at 336–392 (SAHDDPTPAISGAARDEEPRGVENRASAGENRFNRPASSPVASAPRPAHVAAPRMPA) is disordered. Basic and acidic residues predominate over residues 349 to 358 (ARDEEPRGVE). The segment covering 370 to 392 (RPASSPVASAPRPAHVAAPRMPA) has biased composition (low complexity).

The protein belongs to the DNA mismatch repair MutL/HexB family.

Functionally, this protein is involved in the repair of mismatches in DNA. It is required for dam-dependent methyl-directed DNA mismatch repair. May act as a 'molecular matchmaker', a protein that promotes the formation of a stable complex between two or more DNA-binding proteins in an ATP-dependent manner without itself being part of a final effector complex. This chain is DNA mismatch repair protein MutL, found in Edwardsiella ictaluri (strain 93-146).